Here is a 241-residue protein sequence, read N- to C-terminus: Neuroendocrine secretory protein 55 (241 aa).

The N-terminal stretch at 1–46 (MDRRSRPQLGRRARHNYNDLCPPIGRRAATALLWLSCSIALLRALA) is a signal peptide. The segment at 71-241 (AAQVFPEPPE…KRGAIPIRRH (171 aa)) is disordered. Residues 97–125 (EYQEEEFDYESETESESEIESETEFETES) show a composition bias toward acidic residues. Residues 167–177 (PDASPSRAPPS) show a composition bias toward low complexity. Basic and acidic residues predominate over residues 182 to 198 (ESPRQGEEPEDKDPRDP). The segment covering 212–221 (QHRCKPKKPT) has biased composition (basic residues).

Belongs to the NESP55 family. Binds keratan sulfate chains. Post-translationally, may be proteolytically processed to give rise to a number of active peptides. As to expression, highly expressed in adrenal medulla and anterior and posterior pituitary. In the brain, detected in hypothalamus, hippocampus, caudate nucleus, thalamus and, in significantly lower amounts, in the cerebellum.

Its subcellular location is the cytoplasmic vesicle. The protein resides in the secretory vesicle. It localises to the secreted. In Bos taurus (Bovine), this protein is Neuroendocrine secretory protein 55.